The sequence spans 489 residues: WPP domain-interacting protein 1 (489 aa).

Positions 49-73 (SNSVELGKPMSFDSPGDGGGAYSPV) are disordered. 3 short sequence motifs (nuclear localization signal) span residues 80-81 (RK), 83-84 (RR), and 104-105 (KR). Residues 195–264 (PMISSGQGGN…DDAGGEGGES (70 aa)) form a disordered region. Positions 215 to 224 (GESVDFEKEN) are enriched in basic and acidic residues. A coiled-coil region spans residues 323-446 (EIVTLVNNVE…QDLQNDCIEI (124 aa)). A KASH domain is found at 459–489 (SYVLIQLVLLSTVVLLLLSQLLPEPDTVVPT). The chain crosses the membrane as a helical span at residues 460–480 (YVLIQLVLLSTVVLLLLSQLL).

In terms of assembly, homodimer and heterodimer with WIP2. Component of Ran complexes at least composed of WIT1 or WIT2, RANGAP1 or RANGAP2, and WIP1 or WIP2 or WIP3. Interacts with RANGAP1, RANGAP2, WPP1/MAF1, and WPP2/MAF2. Interacts with SUN1 and SUN2. Interacts with KIN1. Core component of the LINC complex which is composed of inner nuclear membrane SUN domain-containing proteins coupled to outer nuclear membrane WIP and WIT proteins. The LINC complex also involves nucleoskeletal proteins CRWN/LINC and possibly KAKU4 and the cytoskeletal myosin KAKU1. Interacts with WIT1 and SUN2. Interacts with WIT2. Interacts with SUN3. Expressed in seedlings, roots, stems, leaves, and flowers.

It localises to the nucleus envelope. The protein resides in the nucleus membrane. Mediates and enhances the nuclear envelope docking of RANGAP proteins mediated by WIT1 and WIT2 in the undifferentiated cells of root tips. As component of the SUN-WIP-WIT2-KAKU1 complex, mediates the transfer of cytoplasmic forces to the nuclear envelope (NE), leading to nuclear shape changes. This chain is WPP domain-interacting protein 1 (WIP1), found in Arabidopsis thaliana (Mouse-ear cress).